A 225-amino-acid chain; its full sequence is Small ribosomal subunit protein uS3 (225 aa).

One can recognise a KH type-2 domain in the interval 16 to 85 (VCEYVVKETE…TPQIEVKDVK (70 aa)). Residues 202-225 (EVGTESKADQTDVEGRETGNAEES) are disordered. The segment covering 205-225 (TESKADQTDVEGRETGNAEES) has biased composition (basic and acidic residues).

The protein belongs to the universal ribosomal protein uS3 family. Part of the 30S ribosomal subunit.

Binds the lower part of the 30S subunit head. This chain is Small ribosomal subunit protein uS3, found in Thermoplasma acidophilum (strain ATCC 25905 / DSM 1728 / JCM 9062 / NBRC 15155 / AMRC-C165).